We begin with the raw amino-acid sequence, 485 residues long: N-succinylglutamate 5-semialdehyde dehydrogenase (485 aa).

An NAD(+)-binding site is contributed by 220–225 (GSANTG). Active-site residues include Glu243 and Cys278.

This sequence belongs to the aldehyde dehydrogenase family. AstD subfamily.

It carries out the reaction N-succinyl-L-glutamate 5-semialdehyde + NAD(+) + H2O = N-succinyl-L-glutamate + NADH + 2 H(+). Its pathway is amino-acid degradation; L-arginine degradation via AST pathway; L-glutamate and succinate from L-arginine: step 4/5. Its function is as follows. Catalyzes the NAD-dependent reduction of succinylglutamate semialdehyde into succinylglutamate. This Vibrio cholerae serotype O1 (strain M66-2) protein is N-succinylglutamate 5-semialdehyde dehydrogenase.